A 98-amino-acid polypeptide reads, in one-letter code: uncharacterized protein (98 aa).

An STAS domain is found at 1 to 85; it reads MLETVPVRCV…GTLKQALENM (85 aa).

Phosphorylated on threonine residue(s). Phosphorylated by PrkC and dephosphorylated by PrpC.

The protein resides in the cytoplasm. This is an uncharacterized protein from Bacillus subtilis (strain 168).